A 453-amino-acid chain; its full sequence is Tetrahydroanabasine acetyltransferase (453 aa).

Catalysis depends on proton acceptor residues His-163 and Asp-388.

Belongs to the plant acyltransferase family. Monomer.

The catalysed reaction is tetrahydroanabasine + acetyl-CoA = ammodendrine + CoA. Its pathway is alkaloid biosynthesis. Functionally, tetrahydroanabasine acetyltransferase involved in the accumulation of quinolizidine type antinutritional alkaloids (QAs). QAs impart a bitter taste to plants, acting as repellents and toxicants for herbivores and predators, and possess a variety of pharmacological effects, including sedative, anticonvulsant, anti-inflammatory, antiviral, antitumor, antipyretic, anti-hepatitis B, antifibrotic, antiallergic, antidiarrheal, analgesic and antimicrobial activities. Mediates the conversion of tetrahydroanabasine into ammodendrine. The chain is Tetrahydroanabasine acetyltransferase from Lupinus angustifolius (Narrow-leaved blue lupine).